Reading from the N-terminus, the 79-residue chain is Putative membrane protein insertion efficiency factor (79 aa).

The protein belongs to the UPF0161 family.

It is found in the cell inner membrane. Could be involved in insertion of integral membrane proteins into the membrane. This chain is Putative membrane protein insertion efficiency factor, found in Bacteroides thetaiotaomicron (strain ATCC 29148 / DSM 2079 / JCM 5827 / CCUG 10774 / NCTC 10582 / VPI-5482 / E50).